The sequence spans 195 residues: Large ribosomal subunit protein uL5 (195 aa).

Belongs to the universal ribosomal protein uL5 family. As to quaternary structure, part of the 50S ribosomal subunit; part of the 5S rRNA/L5/L18/L25 subcomplex. Contacts the 5S rRNA and the P site tRNA. Forms a bridge to the 30S subunit in the 70S ribosome.

In terms of biological role, this is one of the proteins that bind and probably mediate the attachment of the 5S RNA into the large ribosomal subunit, where it forms part of the central protuberance. In the 70S ribosome it contacts protein S13 of the 30S subunit (bridge B1b), connecting the 2 subunits; this bridge is implicated in subunit movement. Contacts the P site tRNA; the 5S rRNA and some of its associated proteins might help stabilize positioning of ribosome-bound tRNAs. The chain is Large ribosomal subunit protein uL5 from Chlorobium chlorochromatii (strain CaD3).